We begin with the raw amino-acid sequence, 532 residues long: Phosphoenolpyruvate carboxykinase (ATP) (532 aa).

Substrate-binding residues include arginine 60, tyrosine 194, and lysine 200. ATP-binding positions include lysine 200, histidine 219, and 237 to 245; that span reads GLSGTGKTT. Residues lysine 200 and histidine 219 each coordinate Mn(2+). Aspartate 258 lines the Mn(2+) pocket. Residues glutamate 286, arginine 324, and threonine 449 each contribute to the ATP site. Position 324 (arginine 324) interacts with substrate.

It belongs to the phosphoenolpyruvate carboxykinase (ATP) family. It depends on Mn(2+) as a cofactor.

It is found in the cytoplasm. The catalysed reaction is oxaloacetate + ATP = phosphoenolpyruvate + ADP + CO2. Its pathway is carbohydrate biosynthesis; gluconeogenesis. Its function is as follows. Involved in the gluconeogenesis. Catalyzes the conversion of oxaloacetate (OAA) to phosphoenolpyruvate (PEP) through direct phosphoryl transfer between the nucleoside triphosphate and OAA. This chain is Phosphoenolpyruvate carboxykinase (ATP), found in Cereibacter sphaeroides (strain ATCC 17029 / ATH 2.4.9) (Rhodobacter sphaeroides).